The primary structure comprises 551 residues: Malate synthase, glyoxysomal (551 aa).

R174 (proton acceptor) is an active-site residue. D458 serves as the catalytic Proton donor.

Belongs to the malate synthase family.

It is found in the glyoxysome. The enzyme catalyses glyoxylate + acetyl-CoA + H2O = (S)-malate + CoA + H(+). Its pathway is carbohydrate metabolism; glyoxylate cycle; (S)-malate from isocitrate: step 2/2. The polypeptide is Malate synthase, glyoxysomal (PMS1) (Candida tropicalis (Yeast)).